We begin with the raw amino-acid sequence, 395 residues long: Chalcone synthase 7 (395 aa).

Residue cysteine 169 is part of the active site.

Belongs to the thiolase-like superfamily. Chalcone/stilbene synthases family.

The enzyme catalyses (E)-4-coumaroyl-CoA + 3 malonyl-CoA + 3 H(+) = 2',4,4',6'-tetrahydroxychalcone + 3 CO2 + 4 CoA. It functions in the pathway secondary metabolite biosynthesis; flavonoid biosynthesis. Functionally, the primary product of this enzyme is 4,2',4',6'-tetrahydroxychalcone (also termed naringenin-chalcone or chalcone) which can under specific conditions spontaneously isomerize into naringenin. This Picea mariana (Black spruce) protein is Chalcone synthase 7 (CSF7).